Reading from the N-terminus, the 217-residue chain is tRNA (guanine-N(7)-)-methyltransferase (217 aa).

Residues Glu43, Asp68, Asn101, and Asn123 each coordinate S-adenosyl-L-methionine. Lys127 is a substrate binding site. Positions Arg129–Arg134 are interaction with RNA. Residues Asp159 and Thr196–Glu199 contribute to the substrate site.

The protein belongs to the class I-like SAM-binding methyltransferase superfamily. TrmB family.

The catalysed reaction is guanosine(46) in tRNA + S-adenosyl-L-methionine = N(7)-methylguanosine(46) in tRNA + S-adenosyl-L-homocysteine. It participates in tRNA modification; N(7)-methylguanine-tRNA biosynthesis. Catalyzes the formation of N(7)-methylguanine at position 46 (m7G46) in tRNA. The protein is tRNA (guanine-N(7)-)-methyltransferase of Clostridium botulinum (strain 657 / Type Ba4).